Consider the following 972-residue polypeptide: MAEDDTYLGAHEQMFHLDPLTHTIFNPELFQPEMPLPTADGPYLQILEQPKQRGFRFRYVCEGPSHGGLPGASSEKNKKSYPQVKICNYVGPAKVIVQLVTNGKNIHLHAHSLVGKHCEDGICTVTAGPKDMVVGFANLGILHVTKKKVFETLEARMTEACTKGYNPGLLVHPDLAYLQAEGGGDRQLTDREKEIIRQAALQQTKEMDLSVVRLMFTAFLPDSTGSFTRRLEPVVSDAIYDSKAPNASNLKIVRMDRTAGCVTGGEEIYLLCDKVQKDDIQIRFYEEEENGGIWEGFGDFSPTDVHRQFAIVFKTPKYKDVNITKPASVFVQLRRKSDLETSEPKPFLYYPEIKDKEEVQRKRQKLMPNFSDSFGGGSGAGAGGGGMFGSGGGGGGAGSTGPGYGFPHYGFPTYGGITFHPGTTKSNAGMKHGTIDTPSKNDSEGCGKNVDREAVNLSGKVTEPTEQDKESSMGVDEVTLTYTVGIKEENSRFQDNLFLEKAMQLAKRHANALFDYAVTGDVKMLLAVQRHLTAVQDENGDSVLHLAIIHLHAQLVRDLLEVTSGLISDDIINMRNDLYQTPLHLAVITKQEAVVDDLLRAGADLSLLDRLGNSVLHLAAKEGQDKILSILLKHKKAALLMDHPNGEGLNAIHIAVMSNSMPCLLLLVAAGADVNAQERKSGRTALHLAVEHDNISLAGCLLLEGDAHVDSTTYDGTTPLHIAAGRGSTRLAALLKAAGADPLVENFEPLYDLDDSWEKDGEDEGVVPGTTPLDMATNWQVFDILNGKPYEPEFTSDDLLAQGDMKQLTEDAKLQLYKLLEIPDPDKNWATLAQKLGLGILNNAFRLSPAPSKTLMDNYEVSGGTIKELVEALRQMGYTEAIEVIQAAFCAPETAAPSPGKGAPQTLSLPLSSASTRSPVDEVRDDSICDSGVETSFRKLSFTESLTSGSSLLTLNKAPHEYGQEGPIEGKI.

The RHD domain maps to 39-246 (ADGPYLQILE…DAIYDSKAPN (208 aa)). Position 61 is an S-nitrosocysteine; alternate (cysteine 61). Cysteine 61 is lipidated: S-(15-deoxy-Delta12,14-prostaglandin J2-9-yl)cysteine; alternate. Lysine 325 is covalently cross-linked (Glycyl lysine isopeptide (Lys-Gly) (interchain with G-Cter in SUMO2)). Position 337 is a phosphoserine; by PKA (serine 337). The Nuclear localization signal signature appears at 360–365 (QRKRQK). The GRR stretch occupies residues 372 to 394 (DSFGGGSGAGAGGGGMFGSGGGG). The tract at residues 425-473 (KSNAGMKHGTIDTPSKNDSEGCGKNVDREAVNLSGKVTEPTEQDKESSM) is disordered. Residues lysine 431 and lysine 440 each carry the N6-acetyllysine; by EP300 modification. Positions 435–972 (IDTPSKNDSE…GQEGPIEGKI (538 aa)) are interaction with CFLAR. Residues 439–454 (SKNDSEGCGKNVDREA) are compositionally biased toward basic and acidic residues. ANK repeat units follow at residues 539-568 (NGDS…GLIS), 578-607 (LYQT…DLSL), 611-640 (LGNS…AALL), 647-676 (EGLN…DVNA), 681-711 (SGRT…HVDS), and 715-744 (DGTT…DPLV). The essential for interaction with HIF1AN stretch occupies residues 647–681 (EGLNAIHIAVMSNSMPCLLLLVAAGADVNAQERKS). Asparagine 675 is modified ((3S)-3-hydroxyasparagine; by HIF1AN). Residue serine 756 is modified to Phosphoserine. Residues 768-798 (PGTTPLDMATNWQVFDILNGKPYEPEFTSDD) form an ANK 7 repeat. In terms of domain architecture, Death spans 814-889 (LQLYKLLEIP…EAIEVIQAAF (76 aa)). Residues 894-926 (TAAPSPGKGAPQTLSLPLSSASTRSPVDEVRDD) are disordered. The segment covering 905–918 (QTLSLPLSSASTRS) has biased composition (polar residues). A phosphoserine; by GSK3-beta; in vitro mark is found at serine 908 and serine 912. The residue at position 927 (serine 927) is a Phosphoserine. Serine 931 and serine 936 each carry phosphoserine; by IKKB. Residue serine 941 is modified to Phosphoserine. A Phosphothreonine modification is found at threonine 947.

Component of the NF-kappa-B p65-p50 complex. Homodimer; component of the NF-kappa-B p50-p50 complex. Component of the NF-kappa-B p105-p50 complex. Component of the NF-kappa-B p50-c-Rel complex. Component of a complex consisting of the NF-kappa-B p50-p50 homodimer and BCL3. Also interacts with MAP3K8. NF-kappa-B p50 subunit interacts with NCOA3 coactivator, which may coactivate NF-kappa-B dependent expression via its histone acetyltransferase activity. Interacts with TSC22D3; this interaction prevents nuclear translocation and DNA-binding. Interacts with SPAG9 and UNC5CL. NFKB1/p105 interacts with CFLAR; the interaction inhibits p105 processing into p50. NFKB1/p105 forms a ternary complex with MAP3K8 and TNIP2. Interacts with GSK3B; the interaction prevents processing of p105 to p50. NFKB1/p50 interacts with NFKBIE. NFKB1/p50 interacts with NFKBIZ. Nuclear factor NF-kappa-B p50 subunit interacts with NFKBID. Directly interacts with MEN1. Interacts with HIF1AN. Interacts with FEM1A; interaction is direct. Generation of the NF-kappa-B p50 (Nuclear factor NF-kappa-B p50 subunit) transcription factor takes place both cotranslationally and post-translationally via non-mutually exclusive mechanisms. A cotranslational processing allows the production of both p50 and p105 (Nuclear factor NF-kappa-B p105 subunit) from a single NFKB1 mRNA. While translation occurs, the particular unfolded structure after the GRR repeat region acts as a substrate for the proteasome, promoting degradation of the C-terminus. The GRR acts as a proteasomal 'stop signal', protecting the region upstream of the GRR from degradation and promoting generation of p50. It is unclear if limited proteasome degradation during cotranslational processing depends on ubiquitination. NF-kappa-B p50 is also generated post-translationally following ubiquitination by the KPC complex, leading to limited processing by the proteasome downstream of the GRR region, thereby generating p50. In terms of processing, phosphorylation at the C-terminus by IKBKB/IKKB acts as a signal for ubiquitination and promotes either complete degradation or processing to generate the NF-kappa-B p50 (Nuclear factor NF-kappa-B p50 subunit). Phosphorylation at Ser-908 and Ser-912 primes p105 for proteolytic processing in response to TNF-alpha stimulation. Phosphorylation at Ser-927, Ser-931 and Ser-936 are required for BTRC/BTRCP-mediated ubiquitination and proteolysis. Phosphorylation at Ser-931 is also required for ubiquitination by the KPC complex and limited processing to generate NF-kappa-B p50 (Nuclear factor NF-kappa-B p50 subunit). Post-translationally, polyubiquitinated at multiple Lys residues in the C-terminus. Polyubiquitinated by the SCF(FBXW11) and SCF(BTRC) complexes following phosphorylation at Ser-923, Ser-927, Ser-931 and Ser-936, leading to its complete degradation. In contrast, polyubiquitination by the KPC complex following phosphorylation at Ser-931 leads to limited proteosomal processing and generation of the active NF-kappa-B p50 (Nuclear factor NF-kappa-B p50 subunit). S-nitrosylation of Cys-61 affects DNA binding. In terms of processing, the covalent modification of cysteine by 15-deoxy-Delta12,14-prostaglandin-J2 is autocatalytic and reversible. It may occur as an alternative to other cysteine modifications, such as S-nitrosylation and S-palmitoylation.

It is found in the cytoplasm. The protein resides in the nucleus. Functionally, NF-kappa-B is a pleiotropic transcription factor present in almost all cell types and is the endpoint of a series of signal transduction events that are initiated by a vast array of stimuli related to many biological processes such as inflammation, immunity, differentiation, cell growth, tumorigenesis and apoptosis. NF-kappa-B is a homo- or heterodimeric complex formed by the Rel-like domain-containing proteins RELA/p65, RELB, NFKB1/p105, NFKB1/p50, REL and NFKB2/p52 and the heterodimeric p65-p50 complex appears to be most abundant one. The dimers bind at kappa-B sites in the DNA of their target genes and the individual dimers have distinct preferences for different kappa-B sites that they can bind with distinguishable affinity and specificity. Different dimer combinations act as transcriptional activators or repressors, respectively. NF-kappa-B is controlled by various mechanisms of post-translational modification and subcellular compartmentalization as well as by interactions with other cofactors or corepressors. NF-kappa-B complexes are held in the cytoplasm in an inactive state complexed with members of the NF-kappa-B inhibitor (I-kappa-B) family. In a conventional activation pathway, I-kappa-B is phosphorylated by I-kappa-B kinases (IKKs) in response to different activators, subsequently degraded thus liberating the active NF-kappa-B complex which translocates to the nucleus. NF-kappa-B heterodimeric p65-p50 and RelB-p50 complexes are transcriptional activators. The NF-kappa-B p50-p50 homodimer is a transcriptional repressor, but can act as a transcriptional activator when associated with BCL3. NFKB1 appears to have dual functions such as cytoplasmic retention of attached NF-kappa-B proteins by p105 and generation of p50 by a cotranslational processing. The proteasome-mediated process ensures the production of both p50 and p105 and preserves their independent function, although processing of NFKB1/p105 also appears to occur post-translationally. p50 binds to the kappa-B consensus sequence 5'-GGRNNYYCC-3', located in the enhancer region of genes involved in immune response and acute phase reactions. In a complex with MAP3K8, NFKB1/p105 represses MAP3K8-induced MAPK signaling; active MAP3K8 is released by proteasome-dependent degradation of NFKB1/p105. Its function is as follows. P105 is the precursor of the active p50 subunit (Nuclear factor NF-kappa-B p50 subunit) of the nuclear factor NF-kappa-B. Acts as a cytoplasmic retention of attached NF-kappa-B proteins by p105. In terms of biological role, constitutes the active form, which associates with RELA/p65 to form the NF-kappa-B p65-p50 complex to form a transcription factor. Together with RELA/p65, binds to the kappa-B consensus sequence 5'-GGRNNYYCC-3', located in the enhancer region of genes involved in immune response and acute phase reactions. In Canis lupus familiaris (Dog), this protein is Nuclear factor NF-kappa-B p105 subunit (NFKB1).